A 242-amino-acid chain; its full sequence is Type III pantothenate kinase (242 aa).

6–13 (DIGNSVAK) lines the ATP pocket. Substrate contacts are provided by residues Tyr86 and 93-96 (GMDR). Asp95 (proton acceptor) is an active-site residue. K(+) is bound at residue Asp116. Thr119 contributes to the ATP binding site. Thr171 serves as a coordination point for substrate.

The protein belongs to the type III pantothenate kinase family. As to quaternary structure, homodimer. Requires NH4(+) as cofactor. The cofactor is K(+).

The protein resides in the cytoplasm. It catalyses the reaction (R)-pantothenate + ATP = (R)-4'-phosphopantothenate + ADP + H(+). It functions in the pathway cofactor biosynthesis; coenzyme A biosynthesis; CoA from (R)-pantothenate: step 1/5. Its function is as follows. Catalyzes the phosphorylation of pantothenate (Pan), the first step in CoA biosynthesis. This chain is Type III pantothenate kinase, found in Phocaeicola vulgatus (strain ATCC 8482 / DSM 1447 / JCM 5826 / CCUG 4940 / NBRC 14291 / NCTC 11154) (Bacteroides vulgatus).